We begin with the raw amino-acid sequence, 476 residues long: Bifunctional protein HldE (476 aa).

Residues 1–318 are ribokinase; sequence MKVTLPDFRR…ENAIRGRAET (318 aa). 195–198 serves as a coordination point for ATP; that stretch reads NLSE. The active site involves Asp264. Positions 344-476 are cytidylyltransferase; the sequence is MTNGIFDILH…IIQSIKNGLG (133 aa).

In the N-terminal section; belongs to the carbohydrate kinase PfkB family. It in the C-terminal section; belongs to the cytidylyltransferase family. Homodimer.

The catalysed reaction is D-glycero-beta-D-manno-heptose 7-phosphate + ATP = D-glycero-beta-D-manno-heptose 1,7-bisphosphate + ADP + H(+). It catalyses the reaction D-glycero-beta-D-manno-heptose 1-phosphate + ATP + H(+) = ADP-D-glycero-beta-D-manno-heptose + diphosphate. Its pathway is nucleotide-sugar biosynthesis; ADP-L-glycero-beta-D-manno-heptose biosynthesis; ADP-L-glycero-beta-D-manno-heptose from D-glycero-beta-D-manno-heptose 7-phosphate: step 1/4. The protein operates within nucleotide-sugar biosynthesis; ADP-L-glycero-beta-D-manno-heptose biosynthesis; ADP-L-glycero-beta-D-manno-heptose from D-glycero-beta-D-manno-heptose 7-phosphate: step 3/4. Catalyzes the phosphorylation of D-glycero-D-manno-heptose 7-phosphate at the C-1 position to selectively form D-glycero-beta-D-manno-heptose-1,7-bisphosphate. Its function is as follows. Catalyzes the ADP transfer from ATP to D-glycero-beta-D-manno-heptose 1-phosphate, yielding ADP-D-glycero-beta-D-manno-heptose. This is Bifunctional protein HldE from Yersinia enterocolitica serotype O:8 / biotype 1B (strain NCTC 13174 / 8081).